The chain runs to 283 residues: Thymidylate synthase (283 aa).

R22 provides a ligand contact to dUMP. The active-site Nucleophile is the C160. Residues 180-183 (RSCD), N191, and 221-223 (HIY) contribute to the dUMP site. D183 provides a ligand contact to (6R)-5,10-methylene-5,6,7,8-tetrahydrofolate. A282 lines the (6R)-5,10-methylene-5,6,7,8-tetrahydrofolate pocket.

Belongs to the thymidylate synthase family. Bacterial-type ThyA subfamily. As to quaternary structure, homodimer.

Its subcellular location is the cytoplasm. It carries out the reaction dUMP + (6R)-5,10-methylene-5,6,7,8-tetrahydrofolate = 7,8-dihydrofolate + dTMP. The protein operates within pyrimidine metabolism; dTTP biosynthesis. In terms of biological role, catalyzes the reductive methylation of 2'-deoxyuridine-5'-monophosphate (dUMP) to 2'-deoxythymidine-5'-monophosphate (dTMP) while utilizing 5,10-methylenetetrahydrofolate (mTHF) as the methyl donor and reductant in the reaction, yielding dihydrofolate (DHF) as a by-product. This enzymatic reaction provides an intracellular de novo source of dTMP, an essential precursor for DNA biosynthesis. The protein is Thymidylate synthase of Colwellia psychrerythraea (strain 34H / ATCC BAA-681) (Vibrio psychroerythus).